We begin with the raw amino-acid sequence, 1454 residues long: Receptor-type tyrosine-protein phosphatase T (1454 aa).

Residues 1-29 (MGSLGGLALCLLRLLLLGLQRPPLPGAGA) form the signal peptide. Topologically, residues 30-770 (QSAAGGCSFD…EKQVDNTVKM (741 aa)) are extracellular. One can recognise an MAM domain in the interval 34-195 (GGCSFDEHYS…VRVLAHPCRK (162 aa)). Asparagine 82, asparagine 102, asparagine 141, and asparagine 212 each carry an N-linked (GlcNAc...) asparagine glycan. In terms of domain architecture, Ig-like C2-type spans 197–288 (PHFLRLQNVE…SGVSNYAELI (92 aa)). Residues cysteine 217 and cysteine 271 are joined by a disulfide bond. Fibronectin type-III domains lie at 295–388 (PIAP…TKCA), 393–487 (GPQN…TEED), and 488–594 (VPGA…SAPS). N-linked (GlcNAc...) asparagine glycans are attached at residues asparagine 425, asparagine 514, asparagine 551, asparagine 605, asparagine 658, and asparagine 688. The region spanning 670 to 767 (AELKPSNLPV…VEPEKQVDNT (98 aa)) is the Fibronectin type-III 4 domain. Residues 771 to 791 (AGVIAGLLMFIIILLGVMLTI) traverse the membrane as a helical segment. Residues 792-1454 (KRRKLAKKQK…EVALEYLSSF (663 aa)) lie on the Cytoplasmic side of the membrane. The segment at 800–852 (QKETQSGAQREMGPVASTDKPTAKLGTNRNDEGFSSSSQDVNGFTDGSRGELS) is disordered. Residues 824-841 (LGTNRNDEGFSSSSQDVN) are compositionally biased toward polar residues. 2 Tyrosine-protein phosphatase domains span residues 902–1156 (FKEE…ILEA) and 1188–1450 (IKDE…ALEY). Substrate contacts are provided by residues aspartate 1065, 1097 to 1103 (CSAGAGR), and glutamine 1141. Cysteine 1097 serves as the catalytic Phosphocysteine intermediate. Serine 1221 carries the phosphoserine modification. Residue cysteine 1391 is the Phosphocysteine intermediate of the active site.

The protein belongs to the protein-tyrosine phosphatase family. Receptor class 2B subfamily. As to expression, expression is restricted to the CNS. Distributed throughout the brain and spinal cord.

It localises to the membrane. It catalyses the reaction O-phospho-L-tyrosyl-[protein] + H2O = L-tyrosyl-[protein] + phosphate. May be involved in both signal transduction and cellular adhesion in the CNS. May have specific signaling roles in the tyrosine phosphorylation/dephosphorylation pathway in the anterior compartment of the adult cerebellar cortex. This chain is Receptor-type tyrosine-protein phosphatase T (Ptprt), found in Mus musculus (Mouse).